The chain runs to 366 residues: Melatonin receptor type 1A (366 aa).

Topologically, residues 1–45 are extracellular; it reads MAGRLWGSPGGTPKGNGSSALLNVSQAAPGAGDGVRPRPSWLAAT. Asn16 and Asn23 each carry an N-linked (GlcNAc...) asparagine glycan. The helical transmembrane segment at 46 to 66 threads the bilayer; the sequence is LASILIFTIVVDIVGNLLVVL. Residues 67-79 are Cytoplasmic-facing; the sequence is SVYRNKKLRNAGN. Residues 80 to 100 traverse the membrane as a helical segment; it reads VFVVSLAVADLLVAVYPYPLA. The Extracellular portion of the chain corresponds to 101 to 118; it reads LASIVNNGWSLSSLHCQL. A disulfide bridge links Cys116 with Cys193. A helical membrane pass occupies residues 119 to 139; sequence SGFLMGLSVIGSVFSITGIAI. Topologically, residues 140-158 are cytoplasmic; the sequence is NRYCCICHSLRYGKLYSGT. Residues 159–179 form a helical membrane-spanning segment; it reads NSLCYVFLIWTLTLVAIVPNL. Residues 180 to 203 lie on the Extracellular side of the membrane; it reads CVGTLQYDPRIYSCTFTQSVSSAY. The chain crosses the membrane as a helical span at residues 204–224; it reads TIAVVVFHFIVPMLVVVFCYL. Topologically, residues 225-256 are cytoplasmic; sequence RIWALVLQVRWKVKPDNKPKLKPQDFRNFVTM. Residues 257–277 traverse the membrane as a helical segment; sequence FVVFVLFAICWAPLNFIGLVV. At 278–290 the chain is on the extracellular side; sequence ASDPASMAPRIPE. Residues 291–311 form a helical membrane-spanning segment; the sequence is WLFVASYYMAYFNSCLNAIIY. The Cytoplasmic portion of the chain corresponds to 312–366; the sequence is GLLNQNFRQEYRKIIVSLCTTKMFFVDSSNHVADRIKRKPSPLIANHNLIKVDSV.

It belongs to the G-protein coupled receptor 1 family.

It localises to the cell membrane. Its function is as follows. High affinity receptor for melatonin. Likely to mediate the reproductive and circadian actions of melatonin. The activity of this receptor is mediated by pertussis toxin sensitive G proteins that inhibit adenylate cyclase activity. Possibly involved in sleep induction, by melatonin activation of the potassium channel KCNMA1/BK and the dissociation of G-beta and G-gamma subunits, thereby decreasing synaptic transmission. In Ovis aries (Sheep), this protein is Melatonin receptor type 1A (MTNR1A).